The following is a 30-amino-acid chain: Dermaseptin-3.4TR (30 aa).

As to expression, expressed by the skin glands.

Its subcellular location is the secreted. In terms of biological role, has antimicrobial activity. The polypeptide is Dermaseptin-3.4TR (Phyllomedusa trinitatis (Trinidad leaf frog)).